The primary structure comprises 396 residues: Inositol polyphosphate 1-phosphatase (396 aa).

Residue Asp54 participates in Li(+) binding. Glu79 is a Mg(2+) binding site. Glu80 contributes to the Li(+) binding site. Mg(2+) is bound by residues Asp153 and Ile155. 1D-myo-inositol 1,4-bisphosphate contacts are provided by Asp156, Ser157, Thr158, Ser264, Lys266, Gly286, Ala287, Lys290, and Thr308. Asp313 is a binding site for Mg(2+). Ser314 carries the phosphoserine modification.

The protein belongs to the inositol monophosphatase superfamily. In terms of assembly, monomer. Mg(2+) serves as cofactor.

It carries out the reaction 1D-myo-inositol 1,4-bisphosphate + H2O = 1D-myo-inositol 4-phosphate + phosphate. It catalyses the reaction 1D-myo-inositol 1,3,4-trisphosphate + H2O = 1D-myo-inositol 3,4-bisphosphate + phosphate. It participates in signal transduction; phosphatidylinositol signaling pathway. Inhibited by Li(+). Mg(2+)-dependent phosphatase that catalyzes the hydrolysis of the 1-position phosphate from inositol 1,4-bisphosphate and inositol 1,3,4-trisphosphate and participates in inositol phosphate metabolism. The protein is Inositol polyphosphate 1-phosphatase of Mus musculus (Mouse).